The primary structure comprises 153 residues: Transcriptional repressor NrdR (153 aa).

A zinc finger lies at 3–34 (CPFCGKENTRVIDSRPADDCSSIRRRRQCDEC). Residues 49 to 139 (LVVIKKDNNR…VYREFKDVNT (91 aa)) form the ATP-cone domain.

This sequence belongs to the NrdR family. Zn(2+) serves as cofactor.

Its function is as follows. Negatively regulates transcription of bacterial ribonucleotide reductase nrd genes and operons by binding to NrdR-boxes. In Lachnoclostridium phytofermentans (strain ATCC 700394 / DSM 18823 / ISDg) (Clostridium phytofermentans), this protein is Transcriptional repressor NrdR.